Consider the following 339-residue polypeptide: uncharacterized protein (339 aa).

An ABC transporter domain is found at 13 to 243 (LSLNKLDVGF…PATPFICEFI (231 aa)). 45-52 (GPSGSGKS) is an ATP binding site.

Belongs to the ABC transporter superfamily.

It localises to the cell inner membrane. Its function is as follows. Probably part of a binding-protein-dependent transport system y4fNOP. Probably responsible for energy coupling to the transport system. This is an uncharacterized protein from Sinorhizobium fredii (strain NBRC 101917 / NGR234).